The sequence spans 20 residues: Probable cinnamyl alcohol dehydrogenase 1 (20 aa).

It belongs to the zinc-containing alcohol dehydrogenase family. Zn(2+) is required as a cofactor.

It catalyses the reaction (E)-cinnamyl alcohol + NADP(+) = (E)-cinnamaldehyde + NADPH + H(+). The enzyme catalyses (E)-coniferol + NADP(+) = (E)-coniferaldehyde + NADPH + H(+). It carries out the reaction (E)-sinapyl alcohol + NADP(+) = (E)-sinapaldehyde + NADPH + H(+). The catalysed reaction is (E)-4-coumaroyl alcohol + NADP(+) = (E)-4-coumaraldehyde + NADPH + H(+). It catalyses the reaction (E)-caffeyl alcohol + NADP(+) = (E)-caffeyl aldehyde + NADPH + H(+). The protein operates within aromatic compound metabolism; phenylpropanoid biosynthesis. In terms of biological role, involved in lignin biosynthesis. Catalyzes the final step specific for the production of lignin monomers, like coniferyl alcohol, sinapyl alcohol and 4-coumaryl alcohol. This is Probable cinnamyl alcohol dehydrogenase 1 from Pseudotsuga menziesii (Douglas-fir).